Reading from the N-terminus, the 600-residue chain is UvrABC system protein C (600 aa).

In terms of domain architecture, GIY-YIG spans glutamate 16–valine 94. One can recognise a UVR domain in the interval histidine 208–tyrosine 243.

This sequence belongs to the UvrC family. Interacts with UvrB in an incision complex.

Its subcellular location is the cytoplasm. Its function is as follows. The UvrABC repair system catalyzes the recognition and processing of DNA lesions. UvrC both incises the 5' and 3' sides of the lesion. The N-terminal half is responsible for the 3' incision and the C-terminal half is responsible for the 5' incision. The protein is UvrABC system protein C of Porphyromonas gingivalis (strain ATCC 33277 / DSM 20709 / CIP 103683 / JCM 12257 / NCTC 11834 / 2561).